The sequence spans 261 residues: Segregation and condensation protein A (261 aa).

The protein belongs to the ScpA family. In terms of assembly, component of a cohesin-like complex composed of ScpA, ScpB and the Smc homodimer, in which ScpA and ScpB bind to the head domain of Smc. The presence of the three proteins is required for the association of the complex with DNA.

It localises to the cytoplasm. In terms of biological role, participates in chromosomal partition during cell division. May act via the formation of a condensin-like complex containing Smc and ScpB that pull DNA away from mid-cell into both cell halves. This is Segregation and condensation protein A from Desulfitobacterium hafniense (strain DSM 10664 / DCB-2).